The chain runs to 466 residues: Serine/threonine-protein kinase SSN3 (466 aa).

Positions 32-396 constitute a Protein kinase domain; the sequence is YKILGFISSG…ARDALRHPWF (365 aa). 38 to 46 is an ATP binding site; sequence ISSGTYGRV. The disordered stretch occupies residues 58 to 105; it reads ASAKSALPSSTRAALSLPKDKLPSPSFTEDSDPLNNPEMCMRPGDRPA. Lys-114 is a binding site for ATP. Asp-216 acts as the Proton acceptor in catalysis. The segment at 421 to 466 is disordered; the sequence is THEDNGDAKMGSLPQSMAGGRLPSSSNFRPASGNIVQPAARKKARI.

This sequence belongs to the protein kinase superfamily. CMGC Ser/Thr protein kinase family. CDC2/CDKX subfamily. As to quaternary structure, component of the SRB8-11 complex, a regulatory module of the Mediator complex. Mg(2+) serves as cofactor.

The protein localises to the nucleus. The catalysed reaction is L-seryl-[protein] + ATP = O-phospho-L-seryl-[protein] + ADP + H(+). It catalyses the reaction L-threonyl-[protein] + ATP = O-phospho-L-threonyl-[protein] + ADP + H(+). It carries out the reaction [DNA-directed RNA polymerase] + ATP = phospho-[DNA-directed RNA polymerase] + ADP + H(+). In terms of biological role, component of the SRB8-11 complex. The SRB8-11 complex is a regulatory module of the Mediator complex which is itself involved in regulation of basal and activated RNA polymerase II-dependent transcription. The SRB8-11 complex may be involved in the transcriptional repression of a subset of genes regulated by Mediator. It may inhibit the association of the Mediator complex with RNA polymerase II to form the holoenzyme complex. The SRB8-11 complex phosphorylates the C-terminal domain (CTD) of the largest subunit of RNA polymerase II. The chain is Serine/threonine-protein kinase SSN3 (SSN3) from Cryptococcus neoformans var. neoformans serotype D (strain B-3501A) (Filobasidiella neoformans).